The chain runs to 278 residues: Nucleotide-binding protein Tlet_0523 (278 aa).

Glycine 9–serine 16 is a binding site for ATP. A GTP-binding site is contributed by aspartate 58 to serine 61.

This sequence belongs to the RapZ-like family.

Its function is as follows. Displays ATPase and GTPase activities. This is Nucleotide-binding protein Tlet_0523 from Pseudothermotoga lettingae (strain ATCC BAA-301 / DSM 14385 / NBRC 107922 / TMO) (Thermotoga lettingae).